We begin with the raw amino-acid sequence, 70 residues long: Small ribosomal subunit protein bS21 (70 aa).

The protein belongs to the bacterial ribosomal protein bS21 family.

The polypeptide is Small ribosomal subunit protein bS21 (Bordetella avium (strain 197N)).